We begin with the raw amino-acid sequence, 305 residues long: Ribonuclease BN (305 aa).

Residues histidine 64, histidine 66, aspartate 68, histidine 69, histidine 141, aspartate 212, and histidine 270 each contribute to the Zn(2+) site. Aspartate 68 acts as the Proton acceptor in catalysis.

The protein belongs to the RNase Z family. RNase BN subfamily. As to quaternary structure, homodimer. It depends on Zn(2+) as a cofactor.

Zinc phosphodiesterase, which has both exoribonuclease and endoribonuclease activities. This Shigella boydii serotype 18 (strain CDC 3083-94 / BS512) protein is Ribonuclease BN.